We begin with the raw amino-acid sequence, 118 residues long: Fluoride-specific ion channel FluC 1 (118 aa).

Helical transmembrane passes span 1-21 and 29-49; these read MIQC…RGFV and FNTS…FCIG. G71 and T74 together coordinate Na(+). Residues 95-115 traverse the membrane as a helical segment; sequence LFILYSILQYGVSFVACLLGY.

The protein belongs to the fluoride channel Fluc/FEX (TC 1.A.43) family.

It is found in the cell membrane. It catalyses the reaction fluoride(in) = fluoride(out). Its activity is regulated as follows. Na(+) is not transported, but it plays an essential structural role and its presence is essential for fluoride channel function. Functionally, fluoride-specific ion channel. Important for reducing fluoride concentration in the cell, thus reducing its toxicity. In Staphylococcus saprophyticus subsp. saprophyticus (strain ATCC 15305 / DSM 20229 / NCIMB 8711 / NCTC 7292 / S-41), this protein is Fluoride-specific ion channel FluC 1.